We begin with the raw amino-acid sequence, 64 residues long: Temporin-ALd (64 aa).

The signal sequence occupies residues M1–C22. Positions E23–R46 are excised as a propeptide. L62 carries the leucine amide modification.

As to expression, expressed by the skin glands.

It localises to the secreted. Antimicrobial peptide with activity against Gram-positive and Gram-negative bacteria and against fungi. Has been tested against S.aureus (MIC=1.25 ug/mL), B.pumilus (MIC=2.5 ug/mL), B.cereus (MIC=15.0 ug/mL), E.coli (MIC=1.25 ug/mL), B.dysenteriae (MIC=5.0 ug/mL), A.cacoaceticus (MIC=15.0 ug/mL), P.aeruginosa (MIC=5.0 ug/mL) and C.albicans (MIC=1.25 ug/mL). Also shows a weak hemolytic activity. This Amolops loloensis (Lolokou Sucker Frog) protein is Temporin-ALd.